The following is a 447-amino-acid chain: Na(+)-translocating NADH-quinone reductase subunit A (447 aa).

It belongs to the NqrA family. As to quaternary structure, composed of six subunits; NqrA, NqrB, NqrC, NqrD, NqrE and NqrF.

The catalysed reaction is a ubiquinone + n Na(+)(in) + NADH + H(+) = a ubiquinol + n Na(+)(out) + NAD(+). NQR complex catalyzes the reduction of ubiquinone-1 to ubiquinol by two successive reactions, coupled with the transport of Na(+) ions from the cytoplasm to the periplasm. NqrA to NqrE are probably involved in the second step, the conversion of ubisemiquinone to ubiquinol. This is Na(+)-translocating NADH-quinone reductase subunit A from Klebsiella pneumoniae (strain 342).